A 463-amino-acid chain; its full sequence is Chromosomal replication initiator protein DnaA (463 aa).

The domain I, interacts with DnaA modulators stretch occupies residues 1–83 (MSTNQIILTD…LQLFQHYNNT (83 aa)). A domain II region spans residues 83 to 124 (TIKSVEIITKELPGTSKTVIELPTKTFADIGSSELNAENIFS). Residues 125–343 (TLDVRFTFDN…GALNKVIAHS (219 aa)) are domain III, AAA+ region. 4 residues coordinate ATP: Gly-171, Gly-173, Lys-174, and Thr-175. Residues 344 to 463 (NFTLKEITLE…INLLMKILQN (120 aa)) are domain IV, binds dsDNA.

This sequence belongs to the DnaA family. Oligomerizes as a right-handed, spiral filament on DNA at oriC.

Its subcellular location is the cytoplasm. In terms of biological role, plays an essential role in the initiation and regulation of chromosomal replication. ATP-DnaA binds to the origin of replication (oriC) to initiate formation of the DNA replication initiation complex once per cell cycle. Binds the DnaA box (a 9 base pair repeat at the origin) and separates the double-stranded (ds)DNA. Forms a right-handed helical filament on oriC DNA; dsDNA binds to the exterior of the filament while single-stranded (ss)DNA is stabiized in the filament's interior. The ATP-DnaA-oriC complex binds and stabilizes one strand of the AT-rich DNA unwinding element (DUE), permitting loading of DNA polymerase. After initiation quickly degrades to an ADP-DnaA complex that is not apt for DNA replication. Binds acidic phospholipids. This Rickettsia canadensis (strain McKiel) protein is Chromosomal replication initiator protein DnaA.